Consider the following 274-residue polypeptide: Thymidylate synthase (274 aa).

A dUMP-binding site is contributed by Arg-21. Position 51 (His-51) interacts with (6R)-5,10-methylene-5,6,7,8-tetrahydrofolate. DUMP is bound at residue 123-124 (RR). The Nucleophile role is filled by Cys-156. Residues 176–179 (RSAD), Asn-187, and 217–219 (HIY) contribute to the dUMP site. Residue Asp-179 participates in (6R)-5,10-methylene-5,6,7,8-tetrahydrofolate binding. Ser-273 contributes to the (6R)-5,10-methylene-5,6,7,8-tetrahydrofolate binding site.

Belongs to the thymidylate synthase family. Bacterial-type ThyA subfamily. Homodimer.

Its subcellular location is the cytoplasm. It carries out the reaction dUMP + (6R)-5,10-methylene-5,6,7,8-tetrahydrofolate = 7,8-dihydrofolate + dTMP. Its pathway is pyrimidine metabolism; dTTP biosynthesis. Catalyzes the reductive methylation of 2'-deoxyuridine-5'-monophosphate (dUMP) to 2'-deoxythymidine-5'-monophosphate (dTMP) while utilizing 5,10-methylenetetrahydrofolate (mTHF) as the methyl donor and reductant in the reaction, yielding dihydrofolate (DHF) as a by-product. This enzymatic reaction provides an intracellular de novo source of dTMP, an essential precursor for DNA biosynthesis. The chain is Thymidylate synthase from Francisella tularensis subsp. tularensis (strain SCHU S4 / Schu 4).